We begin with the raw amino-acid sequence, 949 residues long: Coiled-coil domain-containing protein 66 (949 aa).

Phosphothreonine occurs at positions 115 and 121. Position 369 is a phosphoserine (Ser369). The stretch at 474-558 forms a coiled coil; sequence QVEEKCRKKQ…EQRIRELAQK (85 aa). Residues 570 to 949 are mediates localization to cilia, centrosomes and spindle microtubules and the interaction with PCM1, CEP290, CEP104 and CSPP1; sequence GVDTIQIEYN…NQEENFGSSF (380 aa). Position 606 is a phosphoserine (Ser606). Disordered regions lie at residues 691–714 and 789–809; these read QTKH…KRYI and SFSK…RTQQ.

As to quaternary structure, homodimer; disulfide-linked. Interacts with CEP290. Interacts with PCM1. Interacts with ARMC9, TOGARAM1, CSPP1 and CEP104. Interacts with CDK5RAP2, CEP152, CEP192, TBG1 and PRC1.

The protein localises to the cytoplasm. The protein resides in the cytoskeleton. It localises to the microtubule organizing center. Its subcellular location is the centrosome. It is found in the centriolar satellite. The protein localises to the cell projection. The protein resides in the cilium. It localises to the cilium basal body. Its subcellular location is the cilium axoneme. It is found in the photoreceptor inner segment. The protein localises to the photoreceptor outer segment. Microtubule-binding protein required for ciliogenesis. May function in ciliogenesis by mediating the transport of proteins like BBS4 to the cilium, but also through the organization of the centriolar satellites. Required for the assembly of signaling-competent cilia with proper structure and length. Mediates this function in part by regulating transition zone assembly and basal body recruitment of the IFT-B complex. Cooperates with the ciliopathy proteins CSPP1 and CEP104 during cilium length regulation. Plays two important roles during cell division. First, is required for mitotic progression via regulation of spindle assembly, organization and orientation, levels of spindle microtubules (MTs), kinetochore-fiber integrity, and chromosome alignment. Second, functions during cytokinesis in part by regulating assembly and organization of central spindle and midbody MTs Plays a role in retina morphogenesis and/or homeostasis. The sequence is that of Coiled-coil domain-containing protein 66 from Pongo abelii (Sumatran orangutan).